Reading from the N-terminus, the 705-residue chain is Prolyl endopeptidase (705 aa).

The signal sequence occupies residues 1–20 (MKYKKLSVAVAAFAFAAVSA). Active-site charge relay system residues include Ser556 and His675.

This sequence belongs to the peptidase S9A family. Monomer.

It is found in the periplasm. The catalysed reaction is Hydrolysis of Pro-|-Xaa &gt;&gt; Ala-|-Xaa in oligopeptides.. Functionally, cleaves peptide bonds on the C-terminal side of prolyl residues within peptides that are up to approximately 30 amino acids long. Has an absolute requirement for an X-Pro bond in the trans configuration immediately preceding the Pro-Y scissible bond. This Elizabethkingia miricola (Chryseobacterium miricola) protein is Prolyl endopeptidase.